The primary structure comprises 997 residues: Sorting nexin-19 (997 aa).

The 179-residue stretch at 95-273 folds into the PXA domain; the sequence is ERQLEQEINR…ILVSIFSKYR (179 aa). 2 disordered regions span residues 313 to 333 and 413 to 437; these read SSPA…SPEI and GALE…APGT. Positions 422-435 are enriched in acidic residues; it reads GSECMEGAEAEEAP. Positions 538–668 constitute a PX domain; sequence LRITGTITAR…EFLALNTDAR (131 aa). 2 residues coordinate a 1,2-diacyl-sn-glycero-3-phospho-(1D-myo-inositol-3-phosphate): arginine 587 and arginine 634. Positions 697–728 are disordered; sequence FPRSEPQSPTEELSEAENESKPQTEGKKASKS. Positions 714-724 are enriched in basic and acidic residues; it reads NESKPQTEGKK.

This sequence belongs to the sorting nexin family. As to quaternary structure, interacts with PTPRN.

It localises to the early endosome membrane. It is found in the cytoplasmic vesicle membrane. Functionally, plays a role in intracellular vesicle trafficking and exocytosis. May play a role in maintaining insulin-containing dense core vesicles in pancreatic beta-cells and in preventing their degradation. May play a role in insulin secretion. Interacts with membranes containing phosphatidylinositol 3-phosphate (PtdIns(3P)). In Mus musculus (Mouse), this protein is Sorting nexin-19.